A 508-amino-acid chain; its full sequence is 2,3-bisphosphoglycerate-independent phosphoglycerate mutase (508 aa).

The Mn(2+) site is built by D9 and S59. Catalysis depends on S59, which acts as the Phosphoserine intermediate. Substrate contacts are provided by residues H120, 149-150, R181, R187, 254-257, and K331; these read RD and RADR. Positions 398, 402, 439, 440, and 456 each coordinate Mn(2+).

It belongs to the BPG-independent phosphoglycerate mutase family. Requires Mn(2+) as cofactor.

It catalyses the reaction (2R)-2-phosphoglycerate = (2R)-3-phosphoglycerate. The protein operates within carbohydrate degradation; glycolysis; pyruvate from D-glyceraldehyde 3-phosphate: step 3/5. In terms of biological role, catalyzes the interconversion of 2-phosphoglycerate and 3-phosphoglycerate. The chain is 2,3-bisphosphoglycerate-independent phosphoglycerate mutase from Halobacterium salinarum (strain ATCC 700922 / JCM 11081 / NRC-1) (Halobacterium halobium).